We begin with the raw amino-acid sequence, 51 residues long: uncharacterized protein (51 aa).

Residues 1-28 (MQQPQNITTSSISNNNNNNTSLTLQQQQ) are disordered. The stretch at 13–47 (SNNNNNNTSLTLQQQQEQLQQLQIKRKRNLMKQLQ) forms a coiled coil.

This is an uncharacterized protein from Dictyostelium discoideum (Social amoeba).